A 173-amino-acid chain; its full sequence is MAKRRKGNREKEKETTWQERVIQIRRVSKVVKGGKKLSFRAIVVVGNENGQVGVGVGKAGDVIGAVRKGVADGKKQLIEVSLTKASSITHLTRGASGGAQVIMRPAAPGTGVIAGGAVRTVLELAGVKNILAKQLGSDNPLNNARAAVNALETLRTFSEVAKDRGVSIEHLYT.

Residues 17-80 (WQERVIQIRR…ADGKKQLIEV (64 aa)) enclose the S5 DRBM domain.

This sequence belongs to the universal ribosomal protein uS5 family. In terms of assembly, part of the 30S ribosomal subunit. Contacts proteins S4 and S8.

Functionally, with S4 and S12 plays an important role in translational accuracy. In terms of biological role, located at the back of the 30S subunit body where it stabilizes the conformation of the head with respect to the body. The protein is Small ribosomal subunit protein uS5 of Microcystis aeruginosa (strain NIES-843 / IAM M-2473).